The following is a 493-amino-acid chain: Cysteine--tRNA ligase (493 aa).

Residue Cys29 coordinates Zn(2+). The short motif at 31 to 41 (ATVQSEPHIGH) is the 'HIGH' region element. Zn(2+)-binding residues include Cys214, His239, and Glu243. Positions 270–274 (KMSKS) match the 'KMSKS' region motif. Lys273 is an ATP binding site.

The protein belongs to the class-I aminoacyl-tRNA synthetase family. In terms of assembly, monomer. Zn(2+) serves as cofactor.

The protein resides in the cytoplasm. It carries out the reaction tRNA(Cys) + L-cysteine + ATP = L-cysteinyl-tRNA(Cys) + AMP + diphosphate. The chain is Cysteine--tRNA ligase from Renibacterium salmoninarum (strain ATCC 33209 / DSM 20767 / JCM 11484 / NBRC 15589 / NCIMB 2235).